Reading from the N-terminus, the 123-residue chain is Holo-[acyl-carrier-protein] synthase (123 aa).

Mg(2+) contacts are provided by aspartate 8 and glutamate 50.

Belongs to the P-Pant transferase superfamily. AcpS family. Mg(2+) is required as a cofactor.

The protein localises to the cytoplasm. It catalyses the reaction apo-[ACP] + CoA = holo-[ACP] + adenosine 3',5'-bisphosphate + H(+). Functionally, transfers the 4'-phosphopantetheine moiety from coenzyme A to a Ser of acyl-carrier-protein. This is Holo-[acyl-carrier-protein] synthase from Kocuria rhizophila (strain ATCC 9341 / DSM 348 / NBRC 103217 / DC2201).